A 447-amino-acid polypeptide reads, in one-letter code: Putative branched-chain amino acid carrier protein SAR1419 (447 aa).

12 helical membrane passes run 6-26 (WVIG…IFPP), 40-60 (ILAF…VGAL), 74-94 (PKFS…LFAI), 114-134 (SSIA…YICL), 143-163 (IGSL…IKAY), 193-213 (GYLT…VNAV), 229-249 (LTAG…LGYI), 290-310 (LLGI…IVAV), 326-346 (FVLV…NAVI), 350-370 (IPVL…ILIA), 382-402 (IPVI…LGWL), and 417-437 (LEWF…GIFV).

The protein belongs to the branched chain amino acid transporter family.

Its subcellular location is the cell membrane. In terms of biological role, component of the transport system for branched-chain amino acids (leucine, isoleucine and valine), which is coupled to a proton motive force (Potential). Contributes to NaCl tolerance. This Staphylococcus aureus (strain MRSA252) protein is Putative branched-chain amino acid carrier protein SAR1419.